A 321-amino-acid chain; its full sequence is Phosphate metabolism protein 8 (321 aa).

It belongs to the SSM1 family.

In terms of biological role, may be involved in phosphate metabolism. The chain is Phosphate metabolism protein 8 (PHM8) from Saccharomyces cerevisiae (strain ATCC 204508 / S288c) (Baker's yeast).